A 74-amino-acid chain; its full sequence is Conotoxin MiK41 (74 aa).

The signal sequence occupies residues 1–22 (MKLTCVLIITVLFLTACQLTTA). Positions 23-45 (VTYSRGEHKHRALMSTGTNYRLP) are excised as a propeptide. Cystine bridges form between cysteine 48–cysteine 62, cysteine 55–cysteine 66, and cysteine 61–cysteine 73.

Belongs to the conotoxin O1 superfamily. Expressed by the venom duct.

The protein localises to the secreted. The polypeptide is Conotoxin MiK41 (Conus miles (Soldier cone)).